A 1130-amino-acid polypeptide reads, in one-letter code: MKTSKASQRYRSIRRNASQCYLYQDSLLLGNSDDSFNADETGDSSDPEQIFQNIQFQKDLMANIRCRPWTMGQKLRALRRAKEIVLKFEGRLTRTRGYQAAGAELWRKFARLACNFVVIFIPWEMRIKKIESHFGSGVASYFIFLRWLFGINIVLTVMTGAFVVLPELIAGQPFGSTASKTIPREQITSAQDLDTVWSLGGYLQYSVLFYGYYGRERRIGRAGYRLPLAYFLVGMAVFAYSFIVLLKRMAKNSRTSLASASNENYTFCWRVFCAWDYLIGNPEAAESKTAAILNSIREAILEEQEKKKNKNMAVTVCLRIIANILVLLSLAGSIYLIYFVVDRSQKLEQSKKELTLWEKNEVSVVVSLVTMLAPSAFDLIAALEMYHPRTTLRFQLARVLVLYLGNLYSLIIALLDKVNSMNIEEAATKNITSHWADAPTFSATRTVPEEGQWPTPGSGAELRRNTSTWVVEETSFLTSITPHTKANKTVPYMQGPQGQCWETYVGQEMLKLSVIDMLFTVASILLIDFFRGLFVRYLSDYWCWDLESKFPEYGEFKIAENVLHLVYNQGMIWMGAFFSPCLPAFNVLKLIGLMYLRSWAVLTCNVPHQQVFRASRSNNFYLAMLLFMLFLCMLPTIFAIVHYKPSLNCGPFSGQEKIYDIVSETIENDFPTWFHAVVGHISSPVVILPAVLLLFMLIYYLQSIARSLKLSSQQLRMQIQNARSEDKKKVAQMVEALAIPSDARQAGSATEAESSENSKPKTLQARIQTHEESSKRLLKDSDLISQLSSVYMATSPNNGHMLNFDSLSSKSLRMEAITRSLPQSPGQGSRDPCSPLLDGSRSRPEQDTNRHPHRPCSSTSNLHKNRSCSSVTQTQPLKDVRSEPLSRKDFQPISPPFCGSGVSTLMTHDHSPRAPRYYVVNERDSHKKTHRAFWPERHFKIDALGDIVELYPRNVQQYMSWVPNQPCSPQLSEEEEEMLRRDLVQWSIPASSLTDLPRSSCFYTGDRSENNTRDPKYQRRVYYRSGDNSFEDQLERPTFVHRKPRSRNGQYPQHALKARVKAKFEPSFTESDSVSAASSSDHQNSNNDQYLHVMSSQGRFPRSASQLGRRKAKSRQVLPTDLNDLICSNV.

Residues 1–148 (MKTSKASQRY…ASYFIFLRWL (148 aa)) lie on the Cytoplasmic side of the membrane. A helical membrane pass occupies residues 149–169 (FGINIVLTVMTGAFVVLPELI). Over 170–192 (AGQPFGSTASKTIPREQITSAQD) the chain is Extracellular. Residues 193–213 (LDTVWSLGGYLQYSVLFYGYY) traverse the membrane as a helical segment. The Cytoplasmic segment spans residues 214 to 225 (GRERRIGRAGYR). A helical transmembrane segment spans residues 226 to 246 (LPLAYFLVGMAVFAYSFIVLL). Residues 247–319 (KRMAKNSRTS…KNMAVTVCLR (73 aa)) are Extracellular-facing. An N-linked (GlcNAc...) asparagine glycan is attached at N264. A helical transmembrane segment spans residues 320–340 (IIANILVLLSLAGSIYLIYFV). The Cytoplasmic portion of the chain corresponds to 341–361 (VDRSQKLEQSKKELTLWEKNE). Residues 362–382 (VSVVVSLVTMLAPSAFDLIAA) form a helical membrane-spanning segment. Residues 383-393 (LEMYHPRTTLR) lie on the Extracellular side of the membrane. The chain crosses the membrane as a helical span at residues 394–414 (FQLARVLVLYLGNLYSLIIAL). Residues 415–509 (LDKVNSMNIE…CWETYVGQEM (95 aa)) are Cytoplasmic-facing. A helical transmembrane segment spans residues 510 to 530 (LKLSVIDMLFTVASILLIDFF). The Extracellular portion of the chain corresponds to 531 to 570 (RGLFVRYLSDYWCWDLESKFPEYGEFKIAENVLHLVYNQG). The helical transmembrane segment at 571–591 (MIWMGAFFSPCLPAFNVLKLI) threads the bilayer. Residues 592–619 (GLMYLRSWAVLTCNVPHQQVFRASRSNN) lie on the Cytoplasmic side of the membrane. A helical transmembrane segment spans residues 620–640 (FYLAMLLFMLFLCMLPTIFAI). At 641-680 (VHYKPSLNCGPFSGQEKIYDIVSETIENDFPTWFHAVVGH) the chain is on the extracellular side. Residues 681–701 (ISSPVVILPAVLLLFMLIYYL) form a helical membrane-spanning segment. The Cytoplasmic segment spans residues 702–1130 (QSIARSLKLS…DLNDLICSNV (429 aa)). Disordered regions lie at residues 742 to 774 (DARQ…EESS), 819 to 893 (RSLP…FQPI), 999 to 1019 (SSCF…KYQR), 1033 to 1059 (QLER…LKAR), and 1097 to 1116 (QGRF…KSRQ). Over residues 747-767 (GSATEAESSENSKPKTLQARI) the composition is skewed to polar residues. Residues 840-850 (SRSRPEQDTNR) are compositionally biased toward basic and acidic residues. A compositionally biased stretch (polar residues) spans 856–876 (CSSTSNLHKNRSCSSVTQTQP). 2 stretches are compositionally biased toward basic and acidic residues: residues 878–890 (KDVR…RKDF) and 1006–1017 (DRSENNTRDPKY). Over residues 1097 to 1106 (QGRFPRSASQ) the composition is skewed to polar residues.

This sequence belongs to the TMC family. In terms of tissue distribution, detected in most neuronal organs and also in some non-neuronal tissues.

It is found in the membrane. Probable component of an ion channel. Molecular function hasn't been characterized yet. The protein is Transmembrane channel-like protein 3 of Mus musculus (Mouse).